Consider the following 446-residue polypeptide: Tubulin beta chain (446 aa).

GTP-binding residues include Q11, E69, S138, G142, T143, G144, N204, and N226. E69 contacts Mg(2+). A disordered region spans residues Y422–E446. Acidic residues predominate over residues G429 to E446.

It belongs to the tubulin family. As to quaternary structure, dimer of alpha and beta chains. A typical microtubule is a hollow water-filled tube with an outer diameter of 25 nm and an inner diameter of 15 nM. Alpha-beta heterodimers associate head-to-tail to form protofilaments running lengthwise along the microtubule wall with the beta-tubulin subunit facing the microtubule plus end conferring a structural polarity. Microtubules usually have 13 protofilaments but different protofilament numbers can be found in some organisms and specialized cells. Requires Mg(2+) as cofactor.

Its subcellular location is the cytoplasm. It is found in the cytoskeleton. Functionally, tubulin is the major constituent of microtubules, a cylinder consisting of laterally associated linear protofilaments composed of alpha- and beta-tubulin heterodimers. Microtubules grow by the addition of GTP-tubulin dimers to the microtubule end, where a stabilizing cap forms. Below the cap, tubulin dimers are in GDP-bound state, owing to GTPase activity of alpha-tubulin. The chain is Tubulin beta chain (TUB2) from Gibberella zeae (strain ATCC MYA-4620 / CBS 123657 / FGSC 9075 / NRRL 31084 / PH-1) (Wheat head blight fungus).